Reading from the N-terminus, the 772-residue chain is Semaphorin-3A (772 aa).

Residues Met-1–Cys-22 form the signal peptide. In terms of domain architecture, Sema spans Arg-31–Leu-514. An N-linked (GlcNAc...) asparagine glycan is attached at Asn-53. A disulfide bridge links Cys-103 with Cys-114. An N-linked (GlcNAc...) asparagine glycan is attached at Asn-125. 4 disulfides stabilise this stretch: Cys-132/Cys-141, Cys-269/Cys-381, Cys-293/Cys-341, and Cys-517/Cys-535. Residues Pro-576–Thr-665 form the Ig-like C2-type domain. Asn-591 carries an N-linked (GlcNAc...) asparagine glycan. The cysteines at positions 650 and 723 are disulfide-linked. A disordered region spans residues Asp-730 to Val-772. Positions His-750–Val-772 are enriched in basic and acidic residues.

Belongs to the semaphorin family. As to expression, expressed at relatively high levels in brain and muscle, moderate levels in lung, bursa, and heart and virtually absent in liver. Collapsin-1, -2, -3, and -5 bind to overlapping but distinct axon tracts.

Its subcellular location is the secreted. In terms of biological role, induces the collapse and paralysis of neuronal growth cones. Could serve as a ligand that guides specific growth cones by a motility-inhibiting mechanism. Binds to neuropilin. The polypeptide is Semaphorin-3A (SEMA3A) (Gallus gallus (Chicken)).